A 380-amino-acid chain; its full sequence is tRNA-specific 2-thiouridylase MnmA (380 aa).

ATP is bound by residues 25–32 and methionine 51; that span reads AMSGGVDS. Cysteine 119 functions as the Nucleophile in the catalytic mechanism. An intrachain disulfide couples cysteine 119 to cysteine 216. Position 143 (glycine 143) interacts with ATP. The interval 166 to 168 is interaction with tRNA; it reads KDQ. The active-site Cysteine persulfide intermediate is cysteine 216. The interaction with tRNA stretch occupies residues 320-321; that stretch reads RY.

The protein belongs to the MnmA/TRMU family.

The protein resides in the cytoplasm. The enzyme catalyses S-sulfanyl-L-cysteinyl-[protein] + uridine(34) in tRNA + AH2 + ATP = 2-thiouridine(34) in tRNA + L-cysteinyl-[protein] + A + AMP + diphosphate + H(+). Functionally, catalyzes the 2-thiolation of uridine at the wobble position (U34) of tRNA, leading to the formation of s(2)U34. The protein is tRNA-specific 2-thiouridylase MnmA of Deinococcus radiodurans (strain ATCC 13939 / DSM 20539 / JCM 16871 / CCUG 27074 / LMG 4051 / NBRC 15346 / NCIMB 9279 / VKM B-1422 / R1).